The sequence spans 240 residues: 3-deoxy-D-manno-octulosonic acid kinase (240 aa).

Residue Asp-170 is part of the active site.

The protein belongs to the protein kinase superfamily. KdkA/RfaP family.

The protein localises to the cell inner membrane. It carries out the reaction an alpha-Kdo-(2-&gt;6)-lipid IVA + ATP = a 4-O-phospho-alpha-Kdo-(2-&gt;6)-lipid IVA + ADP + H(+). Its pathway is bacterial outer membrane biogenesis; LPS core biosynthesis. In terms of biological role, catalyzes the ATP-dependent phosphorylation of the 3-deoxy-D-manno-octulosonic acid (Kdo) residue in Kdo-lipid IV(A) at the 4-OH position. The sequence is that of 3-deoxy-D-manno-octulosonic acid kinase from Actinobacillus succinogenes (strain ATCC 55618 / DSM 22257 / CCUG 43843 / 130Z).